A 253-amino-acid chain; its full sequence is ER membrane protein complex subunit 3 (253 aa).

A run of 3 helical transmembrane segments spans residues 10-30 (WVLL…QYIM), 126-146 (FIPQ…FILM), and 176-196 (SISW…LIGL).

It belongs to the EMC3 family. As to quaternary structure, component of the ER membrane protein complex (EMC), which is composed of EMC1, EMC2, EMC3, EMC4, EMC5 and EMC6.

The protein resides in the endoplasmic reticulum membrane. In terms of biological role, the EMC seems to be required for efficient folding of proteins in the endoplasmic reticulum (ER). The sequence is that of ER membrane protein complex subunit 3 (AIM27) from Saccharomyces cerevisiae (strain RM11-1a) (Baker's yeast).